The chain runs to 351 residues: Centromere-binding protein 1 (351 aa).

Residue Met-1 is modified to N-acetylmethionine. 3 stretches are compositionally biased toward polar residues: residues 1-10 (MNSLANNNKL), 43-52 (LLSQESNDGN), and 65-77 (KGTQSQYESGLTS). Disordered stretches follow at residues 1–164 (MNSL…TQQS), 196–233 (KKDISMQPGRRGRKPTTLATTDEWKKQRKDSHKEVERR), and 327–351 (YEDMHTHKKQENERKSTRSDNPHEA). At Ser-45 the chain carries Phosphoserine; by ATM or ATR. Ser-48 carries the post-translational modification Phosphoserine. Ser-84 carries the phosphoserine modification. Composition is skewed to polar residues over residues 100 to 124 (VNYTDLIQGQEDSSDAHTSNQTNAN) and 138 to 164 (TPSNEGVKPNTSLEGMTSSPMESTQQS). The residue at position 138 (Thr-138) is a Phosphothreonine. A bHLH domain is found at 222 to 270 (QRKDSHKEVERRRRENINTAINVLSDLLPVRESSKAAILACAAEYIQKL).

Binds DNA as a dimer. Associates with MET4 to form a heteromeric complex which also includes MET28.

It localises to the nucleus. The protein localises to the mitochondrion. It is found in the chromosome. The protein resides in the centromere. Required for chromosome stability and methionine prototrophy. It is involved in chromosomal segregation. Binds to a highly conserved DNA sequence (5'-RTCACRTG-3'), called CDEI, found in centromeres and in several promoters. DNA-binding activity is enhanced by MET28. Required as an auxiliary factor for transcriptional activation of sulfur metabolism together with MET4 and MET28. The polypeptide is Centromere-binding protein 1 (CBF1) (Saccharomyces cerevisiae (strain ATCC 204508 / S288c) (Baker's yeast)).